A 206-amino-acid polypeptide reads, in one-letter code: ATP-dependent Clp protease proteolytic subunit 2 (206 aa).

The active-site Nucleophile is the serine 100. Histidine 125 is a catalytic residue.

The protein belongs to the peptidase S14 family. Fourteen ClpP subunits assemble into 2 heptameric rings which stack back to back to give a disk-like structure with a central cavity, resembling the structure of eukaryotic proteasomes.

It is found in the cytoplasm. It carries out the reaction Hydrolysis of proteins to small peptides in the presence of ATP and magnesium. alpha-casein is the usual test substrate. In the absence of ATP, only oligopeptides shorter than five residues are hydrolyzed (such as succinyl-Leu-Tyr-|-NHMec, and Leu-Tyr-Leu-|-Tyr-Trp, in which cleavage of the -Tyr-|-Leu- and -Tyr-|-Trp bonds also occurs).. In terms of biological role, cleaves peptides in various proteins in a process that requires ATP hydrolysis. Has a chymotrypsin-like activity. Plays a major role in the degradation of misfolded proteins. The chain is ATP-dependent Clp protease proteolytic subunit 2 from Myxococcus xanthus.